We begin with the raw amino-acid sequence, 597 residues long: Hydrogenase-1 large chain (597 aa).

Residues C76, C79, C576, and C579 each contribute to the Ni(2+) site.

Belongs to the [NiFe]/[NiFeSe] hydrogenase large subunit family. In terms of assembly, heterodimer of a large and a small subunit. Ni(2+) serves as cofactor.

Its subcellular location is the cell membrane. The catalysed reaction is H2 + A = AH2. In terms of biological role, this is one of three E.coli hydrogenases synthesized in response to different physiological conditions. HYD1 is believed to have a role in hydrogen cycling during fermentative growth. In Escherichia coli (strain K12), this protein is Hydrogenase-1 large chain (hyaB).